We begin with the raw amino-acid sequence, 233 residues long: Nuclear speckle RNA-binding protein A (233 aa).

Disordered regions lie at residues M1–T54, V68–V92, and F214–R233. Positions G71–N91 are enriched in gly residues. The RRM domain occupies N136–K222.

As to expression, expressed in root meristems, lateral root primordia and root vascular tissues.

Its subcellular location is the nucleus speckle. Its function is as follows. Alternative splicing (AS) regulator that binds to specific mRNAs and modulates auxin effects on the transcriptome. Displaced from its targets upon binding to AS competitor long non-coding RNA (ASCO-RNA). The chain is Nuclear speckle RNA-binding protein A from Arabidopsis thaliana (Mouse-ear cress).